The sequence spans 161 residues: Probable chemoreceptor glutamine deamidase CheD (161 aa).

This sequence belongs to the CheD family.

The enzyme catalyses L-glutaminyl-[protein] + H2O = L-glutamyl-[protein] + NH4(+). Functionally, probably deamidates glutamine residues to glutamate on methyl-accepting chemotaxis receptors (MCPs), playing an important role in chemotaxis. The protein is Probable chemoreceptor glutamine deamidase CheD of Syntrophomonas wolfei subsp. wolfei (strain DSM 2245B / Goettingen).